Reading from the N-terminus, the 347-residue chain is NADH-ubiquinone oxidoreductase chain 2 (347 aa).

10 helical membrane passes run 3–23 (PPIL…VMLS), 25–45 (HWLL…PILM), 66–86 (ASML…QWVI), 111–131 (FHFW…MILL), 149–169 (INTN…GWGG), 178–198 (IMAY…TYNP), 201–221 (MVLN…LFML), 237–257 (FPLI…LPPL), 274–294 (NMII…YFYL), and 325–345 (LLPP…MLSV).

It belongs to the complex I subunit 2 family. As to quaternary structure, core subunit of respiratory chain NADH dehydrogenase (Complex I) which is composed of 45 different subunits. Interacts with TMEM242.

The protein localises to the mitochondrion inner membrane. The enzyme catalyses a ubiquinone + NADH + 5 H(+)(in) = a ubiquinol + NAD(+) + 4 H(+)(out). Its function is as follows. Core subunit of the mitochondrial membrane respiratory chain NADH dehydrogenase (Complex I) which catalyzes electron transfer from NADH through the respiratory chain, using ubiquinone as an electron acceptor. Essential for the catalytic activity and assembly of complex I. This is NADH-ubiquinone oxidoreductase chain 2 from Canis lupus familiaris (Dog).